The chain runs to 258 residues: UPF0246 protein VV0659 (258 aa).

It belongs to the UPF0246 family.

This chain is UPF0246 protein VV0659, found in Vibrio vulnificus (strain YJ016).